The sequence spans 272 residues: Soluble interferon gamma receptor OPG193 (272 aa).

Positions 1–13 (MRYIIILAVLFIN) are cleaved as a signal peptide. Residues Asn42, Asn150, and Asn267 are each glycosylated (N-linked (GlcNAc...) asparagine; by host).

The protein belongs to the type II cytokine receptor family. Homodimer. Interacts with host IFNG.

The protein resides in the secreted. Functionally, counteracts the antiviral effects of host IFN-gamma. Acts as a soluble IFN-gamma receptor and thus inhibits the interaction between host IFN-gamma and its receptor. The chain is Soluble interferon gamma receptor OPG193 (OPG193) from Homo sapiens (Human).